Consider the following 264-residue polypeptide: ATP synthase subunit a (264 aa).

5 consecutive transmembrane segments (helical) span residues 39-59 (LDTLIISVVLGALFILIFYIV), 97-117 (VAPLALTIFIWVFLMNFMDLV), 139-159 (TADPTLTFAMSITVFVLVIFY), 205-225 (LFGNLFAGELIFILIALLPWW), and 239-259 (LLVITVQAFIFMMLTVVYISL).

It belongs to the ATPase A chain family. F-type ATPases have 2 components, CF(1) - the catalytic core - and CF(0) - the membrane proton channel. CF(1) has five subunits: alpha(3), beta(3), gamma(1), delta(1), epsilon(1). CF(0) has three main subunits: a(1), b(2) and c(9-12). The alpha and beta chains form an alternating ring which encloses part of the gamma chain. CF(1) is attached to CF(0) by a central stalk formed by the gamma and epsilon chains, while a peripheral stalk is formed by the delta and b chains.

It is found in the cell inner membrane. In terms of biological role, key component of the proton channel; it plays a direct role in the translocation of protons across the membrane. In Coxiella burnetii (strain Dugway 5J108-111), this protein is ATP synthase subunit a.